The primary structure comprises 793 residues: Pentatricopeptide repeat-containing protein At1g03100, mitochondrial (793 aa).

Residues 1–87 constitute a mitochondrion transit peptide; that stretch reads MFSLRKTKLQ…REAISSISGS (87 aa). PPR repeat units follow at residues 257 to 291, 292 to 322, 330 to 364, 458 to 492, 495 to 529, 530 to 564, 565 to 599, 601 to 631, 637 to 671, 672 to 707, and 713 to 747; these read NTQV…GVKA, DANL…IDEA, FWQF…GKVA, TEEI…DSPV, DNSM…GVRT, GSSV…GIQL, DSSC…KILR, GNQK…IREV, GVHD…GHSP, NAQT…AAAT, and DQEL…NMFV.

This sequence belongs to the PPR family. P subfamily.

It localises to the mitochondrion. In Arabidopsis thaliana (Mouse-ear cress), this protein is Pentatricopeptide repeat-containing protein At1g03100, mitochondrial.